Reading from the N-terminus, the 418-residue chain is Tyrosine--tRNA ligase (418 aa).

Tyr34 provides a ligand contact to L-tyrosine. The 'HIGH' region signature appears at 39-48 (PTADSLHLGH). Residues Tyr169 and Gln173 each contribute to the L-tyrosine site. Positions 229–233 (KFGKS) match the 'KMSKS' region motif. Lys232 provides a ligand contact to ATP. Residues 352–418 (LNLVDMLVTA…GKKKYAVLTY (67 aa)) form the S4 RNA-binding domain.

It belongs to the class-I aminoacyl-tRNA synthetase family. TyrS type 1 subfamily. As to quaternary structure, homodimer.

It localises to the cytoplasm. It catalyses the reaction tRNA(Tyr) + L-tyrosine + ATP = L-tyrosyl-tRNA(Tyr) + AMP + diphosphate + H(+). Its function is as follows. Catalyzes the attachment of tyrosine to tRNA(Tyr) in a two-step reaction: tyrosine is first activated by ATP to form Tyr-AMP and then transferred to the acceptor end of tRNA(Tyr). The chain is Tyrosine--tRNA ligase from Streptococcus pyogenes serotype M18 (strain MGAS8232).